Consider the following 407-residue polypeptide: Aminomethyltransferase, mitochondrial (407 aa).

Residues 1 to 29 constitute a mitochondrion transit peptide; it reads MRGGLWQLGQSITRRLGQSDKKTIARRCY. The substrate site is built by E234, R265, and Y403.

This sequence belongs to the GcvT family. In terms of assembly, the glycine cleavage system is composed of four proteins: P, T, L and H.

Its subcellular location is the mitochondrion. It catalyses the reaction N(6)-[(R)-S(8)-aminomethyldihydrolipoyl]-L-lysyl-[protein] + (6S)-5,6,7,8-tetrahydrofolate = N(6)-[(R)-dihydrolipoyl]-L-lysyl-[protein] + (6R)-5,10-methylene-5,6,7,8-tetrahydrofolate + NH4(+). In terms of biological role, the glycine cleavage system catalyzes the degradation of glycine. The sequence is that of Aminomethyltransferase, mitochondrial (GDCST) from Flaveria pringlei.